A 142-amino-acid chain; its full sequence is uncharacterized protein (142 aa).

At 1 to 9 (MDMVSPVLN) the chain is on the cytoplasmic side. The chain crosses the membrane as a helical span at residues 10–30 (LQSSILGELVGIIGKVFFLLI). The Extracellular segment spans residues 31 to 41 (EEIKYPIITPK). The chain crosses the membrane as a helical span at residues 42–62 (IIVDAQISSWSLFFFASICNL). At 63 to 101 (SAKFREPIVTTSSIISLMESEKDLKNVNEYFQIMAKMLF) the chain is on the cytoplasmic side. A helical transmembrane segment spans residues 102 to 122 (ILENKIVVSLFVVFNISVLII). The Extracellular portion of the chain corresponds to 123-142 (VKSEPYSYGKVLFKPSSSIF).

The protein resides in the membrane. This is an uncharacterized protein from Saccharomyces cerevisiae (strain ATCC 204508 / S288c) (Baker's yeast).